A 59-amino-acid chain; its full sequence is UPF0434 protein HDEF_0234 (59 aa).

This sequence belongs to the UPF0434 family.

In Hamiltonella defensa subsp. Acyrthosiphon pisum (strain 5AT), this protein is UPF0434 protein HDEF_0234.